Reading from the N-terminus, the 98-residue chain is MTSAFLNLTMAFTLSLLGTFMFRSHLMSTLLCLEGMMLSLFVMTSTSTLNSNSMISMTIPITILVFAACEAAVGLALLVKISNTYGTDYVQNLNLLQC.

3 consecutive transmembrane segments (helical) span residues 2 to 22 (TSAF…TFMF), 26 to 46 (LMST…MTST), and 59 to 79 (IPIT…ALLV).

Belongs to the complex I subunit 4L family. In terms of assembly, core subunit of respiratory chain NADH dehydrogenase (Complex I) which is composed of 45 different subunits.

It localises to the mitochondrion inner membrane. The enzyme catalyses a ubiquinone + NADH + 5 H(+)(in) = a ubiquinol + NAD(+) + 4 H(+)(out). In terms of biological role, core subunit of the mitochondrial membrane respiratory chain NADH dehydrogenase (Complex I) which catalyzes electron transfer from NADH through the respiratory chain, using ubiquinone as an electron acceptor. Part of the enzyme membrane arm which is embedded in the lipid bilayer and involved in proton translocation. This chain is NADH-ubiquinone oxidoreductase chain 4L, found in Rattus norvegicus (Rat).